The chain runs to 706 residues: MATANFGKIQIGIYVEIKRSDGRIHQAMVTSLNEDNESVTVEWIENGDTKGKEIDLESIFSLNPDLVPDEEIEPSPETPPPPASSAKVNKIVKNRRTVASIKNDPPSRDNRVVGSARARPSQFPEQSSSAQQNGSVSDISPVQAAKKEFGPPSRRKSNCVKEVEKLQEKREKRRLQQQELREKRAQDVDATNPNYEIMCMIRDFRGSLDYRPLTTADPIDEHRICVCVRKRPLNKKETQMKDLDVITIPSKDVVMVHEPKQKVDLTRYLENQTFRFDYAFDDSAPNEMVYRFTARPLVETIFERGMATCFAYGQTGSGKTHTMGGDFSGKNQDCSKGIYALAARDVFLMLKKPNYKKLELQVYATFFEIYSGKVFDLLNRKTKLRVLEDGKQQVQVVGLQEREVKCVEDVLKLIDIGNSCRTSGQTSANAHSSRSHAVFQIILRRKGKLHGKFSLIDLAGNERGADTSSADRQTRLEGAEINKSLLALKECIRALGRNKPHTPFRASKLTQVLRDSFIGENSRTCMIATISPGMASCENTLNTLRYANRVKELTVDPTAAGDVRPIMHHPPNQIDDLETQWGVGSSPQRDDLKLLCEQNEEEVSPQLFTFHEAVSQMVEMEEQVVEDHRAVFQESIRWLEDEKALLEMTEEVDYDVDSYATQLEAILEQKIDILTELRDKVKSFRAALQEEEQASKQINPKRPRAL.

Residues 1 to 217 (MATANFGKIQ…LDYRPLTTAD (217 aa)) form a globular region. The segment at 66–139 (LVPDEEIEPS…AQQNGSVSDI (74 aa)) is disordered. S75 is modified (phosphoserine). A phosphothreonine mark is found at T78 and T97. S100 bears the Phosphoserine mark. An N6-acetyllysine modification is found at K102. Residues 123-139 (FPEQSSSAQQNGSVSDI) show a composition bias toward polar residues. Phosphoserine is present on residues S135 and S140. Residues 165-186 (KLQEKREKRRLQQQELREKRAQ) form a disordered region. Residues 223–553 (RICVCVRKRP…LRYANRVKEL (331 aa)) form the Kinesin motor domain. An ATP-binding site is contributed by 313 to 320 (GQTGSGKT). D556 and Q573 each carry phosphoserine. The stretch at 660–699 (ATQLEAILEQKIDILTELRDKVKSFRAALQEEEQASKQIN) forms a coiled coil.

This sequence belongs to the TRAFAC class myosin-kinesin ATPase superfamily. Kinesin family. MCAK/KIF2 subfamily. As to quaternary structure, interacts with AURKA and PLK1. Interacts with PSRC1. Interacts with MCRS1; the interaction enhances recruitment of KIF2A to the minus ends of spindle microtubules which promotes chromosome alignment.

It localises to the cytoplasm. The protein localises to the cytoskeleton. The protein resides in the microtubule organizing center. Its subcellular location is the centrosome. It is found in the spindle pole. It localises to the spindle. Plus end-directed microtubule-dependent motor required for normal brain development. May regulate microtubule dynamics during axonal growth. Required for normal progression through mitosis. Required for normal congress of chromosomes at the metaphase plate. Required for normal spindle dynamics during mitosis. Promotes spindle turnover. Implicated in formation of bipolar mitotic spindles. Has microtubule depolymerization activity. The chain is Kinesin-like protein KIF2A (KIF2A) from Homo sapiens (Human).